The primary structure comprises 99 residues: Protein AC4 (99 aa).

The protein belongs to the geminiviridae protein AC4/C4 family.

Its function is as follows. Pathogenicity determinant. May act as a suppressor of RNA-mediated gene silencing, also known as post-transcriptional gene silencing (PTGS), a mechanism of plant viral defense that limits the accumulation of viral RNAs. The polypeptide is Protein AC4 (Glycine max (Soybean)).